The following is a 265-amino-acid chain: Chorismate mutase 2 (265 aa).

The 256-residue stretch at 10 to 265 (GSGCSNVLSL…EVEYLLRRLD (256 aa)) folds into the Chorismate mutase domain.

In terms of assembly, homodimer. As to expression, expressed in roots, stems, cauline leaves and flowers, and at lower levels in rosette leaves and siliques.

It localises to the cytoplasm. Its subcellular location is the cytosol. The enzyme catalyses chorismate = prephenate. It participates in metabolic intermediate biosynthesis; prephenate biosynthesis; prephenate from chorismate: step 1/1. With respect to regulation, no allosteric regulation. This is Chorismate mutase 2 from Arabidopsis thaliana (Mouse-ear cress).